A 348-amino-acid polypeptide reads, in one-letter code: Holliday junction branch migration complex subunit RuvB (348 aa).

A large ATPase domain (RuvB-L) region spans residues 1 to 182 (MRIELLNTPA…FGINSRFDYY (182 aa)). ATP is bound by residues I21, R22, G63, K66, T67, T68, 129-131 (EDF), R172, Y182, and R219. Position 67 (T67) interacts with Mg(2+). Residues 183-253 (SADLLEKIII…IAMTTLDCLE (71 aa)) are small ATPAse domain (RuvB-S). The tract at residues 256–348 (EEGLDDMDKK…EFPLEDDQRQ (93 aa)) is head domain (RuvB-H). Residues R311 and R316 each coordinate DNA.

This sequence belongs to the RuvB family. Homohexamer. Forms an RuvA(8)-RuvB(12)-Holliday junction (HJ) complex. HJ DNA is sandwiched between 2 RuvA tetramers; dsDNA enters through RuvA and exits via RuvB. An RuvB hexamer assembles on each DNA strand where it exits the tetramer. Each RuvB hexamer is contacted by two RuvA subunits (via domain III) on 2 adjacent RuvB subunits; this complex drives branch migration. In the full resolvosome a probable DNA-RuvA(4)-RuvB(12)-RuvC(2) complex forms which resolves the HJ.

The protein resides in the cytoplasm. The enzyme catalyses ATP + H2O = ADP + phosphate + H(+). The RuvA-RuvB-RuvC complex processes Holliday junction (HJ) DNA during genetic recombination and DNA repair, while the RuvA-RuvB complex plays an important role in the rescue of blocked DNA replication forks via replication fork reversal (RFR). RuvA specifically binds to HJ cruciform DNA, conferring on it an open structure. The RuvB hexamer acts as an ATP-dependent pump, pulling dsDNA into and through the RuvAB complex. RuvB forms 2 homohexamers on either side of HJ DNA bound by 1 or 2 RuvA tetramers; 4 subunits per hexamer contact DNA at a time. Coordinated motions by a converter formed by DNA-disengaged RuvB subunits stimulates ATP hydrolysis and nucleotide exchange. Immobilization of the converter enables RuvB to convert the ATP-contained energy into a lever motion, pulling 2 nucleotides of DNA out of the RuvA tetramer per ATP hydrolyzed, thus driving DNA branch migration. The RuvB motors rotate together with the DNA substrate, which together with the progressing nucleotide cycle form the mechanistic basis for DNA recombination by continuous HJ branch migration. Branch migration allows RuvC to scan DNA until it finds its consensus sequence, where it cleaves and resolves cruciform DNA. In Chlorobium limicola (strain DSM 245 / NBRC 103803 / 6330), this protein is Holliday junction branch migration complex subunit RuvB.